Consider the following 552-residue polypeptide: Phosphoglucomutase (552 aa).

The active-site Phosphoserine intermediate is serine 143. Mg(2+) is bound by residues serine 143, aspartate 295, aspartate 297, and aspartate 299.

It belongs to the phosphohexose mutase family. Requires Mg(2+) as cofactor.

The enzyme catalyses alpha-D-glucose 1-phosphate = alpha-D-glucose 6-phosphate. The protein operates within glycolipid metabolism; diglucosyl-diacylglycerol biosynthesis. Functionally, catalyzes the interconversion between glucose-6-phosphate and alpha-glucose-1-phosphate. This is the first step in the biosynthesis of diglucosyl-diacylglycerol (Glc2-DAG), i.e. the predominant glycolipid found in the S.aureus membrane, which is also used as a membrane anchor for lipoteichoic acid (LTA). The polypeptide is Phosphoglucomutase (pgcA) (Staphylococcus aureus (strain USA300)).